Here is a 447-residue protein sequence, read N- to C-terminus: N-succinylarginine dihydrolase (447 aa).

Substrate is bound by residues 19–28 (AGLSFGNEAS), asparagine 110, and 137–138 (HR). The active site involves glutamate 174. Substrate is bound at residue arginine 212. The active site involves histidine 248. Substrate contacts are provided by aspartate 250 and asparagine 359. Residue cysteine 365 is the Nucleophile of the active site.

It belongs to the succinylarginine dihydrolase family. In terms of assembly, homodimer.

It catalyses the reaction N(2)-succinyl-L-arginine + 2 H2O + 2 H(+) = N(2)-succinyl-L-ornithine + 2 NH4(+) + CO2. The protein operates within amino-acid degradation; L-arginine degradation via AST pathway; L-glutamate and succinate from L-arginine: step 2/5. In terms of biological role, catalyzes the hydrolysis of N(2)-succinylarginine into N(2)-succinylornithine, ammonia and CO(2). This is N-succinylarginine dihydrolase from Shigella boydii serotype 4 (strain Sb227).